The primary structure comprises 99 residues: Large ribosomal subunit protein bL28 (99 aa).

The disordered stretch occupies residues M1–S25. Residues G11–N22 are compositionally biased toward polar residues.

The protein belongs to the bacterial ribosomal protein bL28 family.

The chain is Large ribosomal subunit protein bL28 from Rhodospirillum centenum (strain ATCC 51521 / SW).